Reading from the N-terminus, the 436-residue chain is ATP-dependent RNA helicase RhlB (436 aa).

The Q motif signature appears at 9 to 37 (QKFADLDLLPQVIEGLEKKGFDYCTPIQA). Residues 40–219 (LPVLLTGQDI…FEHMHNPEHV (180 aa)) form the Helicase ATP-binding domain. Position 53-60 (53-60 (AQTGTGKT)) interacts with ATP. The DEAD box motif lies at 165–168 (DEAD). The 146-residue stretch at 245–390 (ALLQTLIEEE…MSDYDASALL (146 aa)) folds into the Helicase C-terminal domain. The interval 398-436 (RLRTRNPQQRRSNNNGPRNGNRKPNQNRRPRQPRHNKEA) is disordered. Over residues 402–421 (RNPQQRRSNNNGPRNGNRKP) the composition is skewed to low complexity. A compositionally biased stretch (basic residues) spans 422-436 (NQNRRPRQPRHNKEA).

It belongs to the DEAD box helicase family. RhlB subfamily. In terms of assembly, component of the RNA degradosome, which is a multiprotein complex involved in RNA processing and mRNA degradation.

The protein localises to the cytoplasm. The catalysed reaction is ATP + H2O = ADP + phosphate + H(+). DEAD-box RNA helicase involved in RNA degradation. Has RNA-dependent ATPase activity and unwinds double-stranded RNA. The protein is ATP-dependent RNA helicase RhlB of Vibrio atlanticus (strain LGP32) (Vibrio splendidus (strain Mel32)).